A 187-amino-acid polypeptide reads, in one-letter code: RNA 2',3'-cyclic phosphodiesterase (187 aa).

Catalysis depends on His-40, which acts as the Proton donor. 2 consecutive short sequence motifs (HXTX) follow at residues 40 to 43 (HLTL) and 125 to 128 (HITI). The Proton acceptor role is filled by His-125.

It belongs to the 2H phosphoesterase superfamily. ThpR family.

The catalysed reaction is a 3'-end 2',3'-cyclophospho-ribonucleotide-RNA + H2O = a 3'-end 2'-phospho-ribonucleotide-RNA + H(+). Functionally, hydrolyzes RNA 2',3'-cyclic phosphodiester to an RNA 2'-phosphomonoester. In Thermotoga maritima (strain ATCC 43589 / DSM 3109 / JCM 10099 / NBRC 100826 / MSB8), this protein is RNA 2',3'-cyclic phosphodiesterase.